The following is an 860-amino-acid chain: Mycobactin import ATP-binding/permease protein IrtA (860 aa).

Residues 1–293 lie on the Cytoplasmic side of the membrane; sequence MARGIQGVMM…GRLLAPLKTT (293 aa). In terms of domain architecture, FAD-binding FR-type spans 15–124; the sequence is ARDHQATVVS…LGSAGFSVPE (110 aa). Residues 70–73, 87–91, 97–98, and 238–240 each bind FAD; these read RAYT, DVVLH, AS, and TEG. Residues 242 to 275 are disordered; sequence AMGTKRGDDDKTPEVNPAPRADKPEAPAPAAAGR. The helical transmembrane segment at 294–314 threads the bilayer; it reads LIISGVLQAIITLVQLAPFVL. One can recognise an ABC transmembrane type-1 domain in the interval 295 to 577; sequence IISGVLQAII…IAYGLGGIRG (283 aa). Residues 315–335 are Periplasmic-facing; sequence LVELARLLLSGASSDRLWTLG. The helical transmembrane segment at 336–356 threads the bilayer; the sequence is VVAISLLGTGSFLAAALTLWL. At 357 to 409 the chain is on the cytoplasmic side; the sequence is HLVDARFARDLRTGLLTKMSRLPLGWFTARGSGSIKQLVQDDTLSLHYLITHA. Residues 410–430 form a helical membrane-spanning segment; it reads IPDAVAAVIAPVAVLVYLFVV. The Periplasmic segment spans residues 431-433; that stretch reads DWR. Residues 434–454 traverse the membrane as a helical segment; the sequence is LALVMFVPVLIYLVLMTVMTI. Residues 455–525 lie on the Cytoplasmic side of the membrane; sequence QSGPKIAQSQ…KKSMMDLVTR (71 aa). Residues 526–546 form a helical membrane-spanning segment; sequence PGTFLWLIVAVGTPMITSGAM. The Periplasmic portion of the chain corresponds to 547-550; that stretch reads DPVD. Residues 551–571 form a helical membrane-spanning segment; it reads ILPFLLLGTTFGVRLLGIAYG. Over 572 to 860 the chain is Cytoplasmic; that stretch reads LGGIRGGMLA…AAGPTGEAVR (289 aa). One can recognise an ABC transporter domain in the interval 609–842; sequence VVFDNVTFGY…AGRYRQLWET (234 aa). Residue 642–649 coordinates ATP; it reads GPSGSGKS.

Belongs to the ABC transporter superfamily. Siderophore-Fe(3+) uptake transporter (SIUT) (TC 3.A.1.21) family. As to quaternary structure, forms a heterodimer with IrtB. FAD serves as cofactor.

Its subcellular location is the cell inner membrane. Part of the ABC transporter complex IrtAB involved in the import of iron-bound mycobactin (Fe-MBT) and carboxymycobactin (Fe-cMBT). Has a preference for Fe-MBT over Fe-cMBT. Mycobactins are then reduced by the siderophore interaction domain to facilitate iron release in the bacterial cell. Transmembrane domains (TMD) form a pore in the membrane and the ATP-binding domain (NBD) is responsible for energy generation. The chain is Mycobactin import ATP-binding/permease protein IrtA from Mycolicibacterium smegmatis (strain ATCC 700084 / mc(2)155) (Mycobacterium smegmatis).